The following is a 328-amino-acid chain: Lytic polysaccharide monooxygenase aasB (328 aa).

Residues 1-18 (MKAFFAISASTLLATVHG) form the signal peptide. Histidine 19 is a binding site for Cu(2+). Residues cysteine 40 and cysteine 43 are joined by a disulfide bond. Residue asparagine 54 is glycosylated (N-linked (GlcNAc...) asparagine). Disulfide bonds link cysteine 66/cysteine 245, cysteine 102/cysteine 203, cysteine 118/cysteine 145, cysteine 153/cysteine 161, cysteine 167/cysteine 173, and cysteine 181/cysteine 192. Histidine 109 is a binding site for Cu(2+). Cu(2+) is bound at residue tyrosine 242. Asparagine 306 carries N-linked (GlcNAc...) asparagine glycosylation.

This sequence belongs to the polysaccharide monooxygenase AA13 family. The cofactor is Cu(2+).

Its subcellular location is the secreted. The enzyme catalyses starch + reduced acceptor + O2 = D-glucono-1,5-lactone-terminated malto-oligosaccharides + short-chain malto-oligosaccharides + acceptor + H2O.. Lytic polysaccharide monooxygenase involved in breakdown of granular resistant starch. In Emericella nidulans (strain FGSC A4 / ATCC 38163 / CBS 112.46 / NRRL 194 / M139) (Aspergillus nidulans), this protein is Lytic polysaccharide monooxygenase aasB.